The chain runs to 89 residues: Small ribosomal subunit protein uS15 (89 aa).

Belongs to the universal ribosomal protein uS15 family. As to quaternary structure, part of the 30S ribosomal subunit. Forms a bridge to the 50S subunit in the 70S ribosome, contacting the 23S rRNA.

Functionally, one of the primary rRNA binding proteins, it binds directly to 16S rRNA where it helps nucleate assembly of the platform of the 30S subunit by binding and bridging several RNA helices of the 16S rRNA. In terms of biological role, forms an intersubunit bridge (bridge B4) with the 23S rRNA of the 50S subunit in the ribosome. This is Small ribosomal subunit protein uS15 from Corynebacterium glutamicum (strain R).